Reading from the N-terminus, the 146-residue chain is Large ribosomal subunit protein uL15 (146 aa).

Over residues 1–13 (MKLHELKPAEGSR) the composition is skewed to basic and acidic residues. The segment at 1-52 (MKLHELKPAEGSRKVRNRVGRGIGSGNGKTAGKGHKGQNARSGGGVRLGFEG) is disordered. Composition is skewed to gly residues over residues 21–31 (RGIGSGNGKTA) and 42–52 (SGGGVRLGFEG).

Belongs to the universal ribosomal protein uL15 family. Part of the 50S ribosomal subunit.

Its function is as follows. Binds to the 23S rRNA. This chain is Large ribosomal subunit protein uL15, found in Bacillus anthracis (strain A0248).